A 370-amino-acid chain; its full sequence is 4-hydroxy-3-methylbut-2-en-1-yl diphosphate synthase (flavodoxin) (370 aa).

[4Fe-4S] cluster contacts are provided by Cys-268, Cys-271, Cys-303, and Glu-310.

Belongs to the IspG family. The cofactor is [4Fe-4S] cluster.

It catalyses the reaction (2E)-4-hydroxy-3-methylbut-2-enyl diphosphate + oxidized [flavodoxin] + H2O + 2 H(+) = 2-C-methyl-D-erythritol 2,4-cyclic diphosphate + reduced [flavodoxin]. The protein operates within isoprenoid biosynthesis; isopentenyl diphosphate biosynthesis via DXP pathway; isopentenyl diphosphate from 1-deoxy-D-xylulose 5-phosphate: step 5/6. Its function is as follows. Converts 2C-methyl-D-erythritol 2,4-cyclodiphosphate (ME-2,4cPP) into 1-hydroxy-2-methyl-2-(E)-butenyl 4-diphosphate. This chain is 4-hydroxy-3-methylbut-2-en-1-yl diphosphate synthase (flavodoxin), found in Bacillus anthracis (strain A0248).